The chain runs to 272 residues: 3-methyl-2-oxobutanoate hydroxymethyltransferase (272 aa).

Positions 43 and 82 each coordinate Mg(2+). 3-methyl-2-oxobutanoate is bound by residues 43 to 44 (DS), aspartate 82, and lysine 112. Glutamate 114 contributes to the Mg(2+) binding site. The Proton acceptor role is filled by glutamate 179.

This sequence belongs to the PanB family. Homodecamer; pentamer of dimers. Mg(2+) serves as cofactor.

Its subcellular location is the cytoplasm. The catalysed reaction is 3-methyl-2-oxobutanoate + (6R)-5,10-methylene-5,6,7,8-tetrahydrofolate + H2O = 2-dehydropantoate + (6S)-5,6,7,8-tetrahydrofolate. The protein operates within cofactor biosynthesis; (R)-pantothenate biosynthesis; (R)-pantoate from 3-methyl-2-oxobutanoate: step 1/2. Its function is as follows. Catalyzes the reversible reaction in which hydroxymethyl group from 5,10-methylenetetrahydrofolate is transferred onto alpha-ketoisovalerate to form ketopantoate. The polypeptide is 3-methyl-2-oxobutanoate hydroxymethyltransferase (Staphylococcus aureus (strain COL)).